The sequence spans 57 residues: Large ribosomal subunit protein bL32 (57 aa).

A disordered region spans residues 1 to 25 (MATPSNKNSKSHKRNRRGHIGLNVP). Over residues 9 to 19 (SKSHKRNRRGH) the composition is skewed to basic residues.

Belongs to the bacterial ribosomal protein bL32 family.

The protein is Large ribosomal subunit protein bL32 of Leuconostoc mesenteroides subsp. mesenteroides (strain ATCC 8293 / DSM 20343 / BCRC 11652 / CCM 1803 / JCM 6124 / NCDO 523 / NBRC 100496 / NCIMB 8023 / NCTC 12954 / NRRL B-1118 / 37Y).